A 464-amino-acid polypeptide reads, in one-letter code: Siroheme synthase (464 aa).

The precorrin-2 dehydrogenase /sirohydrochlorin ferrochelatase stretch occupies residues 1-203; it reads MEFLPLFHNL…GQGAEAERML (203 aa). Residues 22 to 23 and 43 to 44 each bind NAD(+); these read EI and PE. Phosphoserine is present on Ser128. Positions 216–464 are uroporphyrinogen-III C-methyltransferase; it reads GEVYLVGAGP…AWFEGAQATL (249 aa). Pro225 provides a ligand contact to S-adenosyl-L-methionine. Catalysis depends on Asp248, which acts as the Proton acceptor. Residue Lys270 is the Proton donor of the active site. S-adenosyl-L-methionine-binding positions include 301-303, Ile306, 331-332, Met383, and Gly412; these read GGD and TA.

This sequence in the N-terminal section; belongs to the precorrin-2 dehydrogenase / sirohydrochlorin ferrochelatase family. The protein in the C-terminal section; belongs to the precorrin methyltransferase family.

It carries out the reaction uroporphyrinogen III + 2 S-adenosyl-L-methionine = precorrin-2 + 2 S-adenosyl-L-homocysteine + H(+). It catalyses the reaction precorrin-2 + NAD(+) = sirohydrochlorin + NADH + 2 H(+). The catalysed reaction is siroheme + 2 H(+) = sirohydrochlorin + Fe(2+). It functions in the pathway cofactor biosynthesis; adenosylcobalamin biosynthesis; precorrin-2 from uroporphyrinogen III: step 1/1. It participates in cofactor biosynthesis; adenosylcobalamin biosynthesis; sirohydrochlorin from precorrin-2: step 1/1. The protein operates within porphyrin-containing compound metabolism; siroheme biosynthesis; precorrin-2 from uroporphyrinogen III: step 1/1. Its pathway is porphyrin-containing compound metabolism; siroheme biosynthesis; siroheme from sirohydrochlorin: step 1/1. It functions in the pathway porphyrin-containing compound metabolism; siroheme biosynthesis; sirohydrochlorin from precorrin-2: step 1/1. Its function is as follows. Multifunctional enzyme that catalyzes the SAM-dependent methylations of uroporphyrinogen III at position C-2 and C-7 to form precorrin-2 via precorrin-1. Then it catalyzes the NAD-dependent ring dehydrogenation of precorrin-2 to yield sirohydrochlorin. Finally, it catalyzes the ferrochelation of sirohydrochlorin to yield siroheme. The chain is Siroheme synthase from Pseudomonas syringae pv. syringae (strain B728a).